Consider the following 138-residue polypeptide: Basic phospholipase A2 PLA-B' (138 aa).

A signal peptide spans 1 to 16 (MRTLWITAVLLVGVEG). 7 disulfides stabilise this stretch: Cys-42–Cys-131, Cys-44–Cys-60, Cys-59–Cys-111, Cys-65–Cys-138, Cys-66–Cys-104, Cys-73–Cys-97, and Cys-91–Cys-102. 3 residues coordinate Ca(2+): Tyr-43, Gly-45, and Gly-47. His-63 is an active-site residue. Residue Asp-64 participates in Ca(2+) binding. Residue Asp-105 is part of the active site.

This sequence belongs to the phospholipase A2 family. Group II subfamily. D49 sub-subfamily. It depends on Ca(2+) as a cofactor. As to expression, expressed by the venom gland.

Its subcellular location is the secreted. It carries out the reaction a 1,2-diacyl-sn-glycero-3-phosphocholine + H2O = a 1-acyl-sn-glycero-3-phosphocholine + a fatty acid + H(+). PLA2 catalyzes the calcium-dependent hydrolysis of the 2-acyl groups in 3-sn-phosphoglycerides. This Protobothrops flavoviridis (Habu) protein is Basic phospholipase A2 PLA-B'.